We begin with the raw amino-acid sequence, 273 residues long: Shikimate dehydrogenase (NADP(+)) (273 aa).

Shikimate is bound by residues 14–16 (SKS) and Thr61. Lys65 acts as the Proton acceptor in catalysis. Shikimate contacts are provided by Asn86 and Asp102. NADP(+) contacts are provided by residues 126–130 (GAGGA), 150–155 (NRTHAR), and Met213. Tyr215 is a binding site for shikimate. Gly237 lines the NADP(+) pocket.

It belongs to the shikimate dehydrogenase family. In terms of assembly, homodimer.

It catalyses the reaction shikimate + NADP(+) = 3-dehydroshikimate + NADPH + H(+). The protein operates within metabolic intermediate biosynthesis; chorismate biosynthesis; chorismate from D-erythrose 4-phosphate and phosphoenolpyruvate: step 4/7. Involved in the biosynthesis of the chorismate, which leads to the biosynthesis of aromatic amino acids. Catalyzes the reversible NADPH linked reduction of 3-dehydroshikimate (DHSA) to yield shikimate (SA). This Aeromonas hydrophila subsp. hydrophila (strain ATCC 7966 / DSM 30187 / BCRC 13018 / CCUG 14551 / JCM 1027 / KCTC 2358 / NCIMB 9240 / NCTC 8049) protein is Shikimate dehydrogenase (NADP(+)).